We begin with the raw amino-acid sequence, 158 residues long: Large ribosomal subunit protein uL30 (158 aa).

Belongs to the universal ribosomal protein uL30 family. As to quaternary structure, part of the 50S ribosomal subunit.

The polypeptide is Large ribosomal subunit protein uL30 (Saccharolobus solfataricus (strain ATCC 35092 / DSM 1617 / JCM 11322 / P2) (Sulfolobus solfataricus)).